The sequence spans 73 residues: Antitoxin VapB2 (73 aa).

In terms of assembly, forms a homodimer, which binds to a toxin homodimer, which then oligomerizes further to a hetero-octamer. When bound to toxin VapC2 the toxin activity is inhibited; 1 antitoxin may suffice to inhibit toxin.

In terms of biological role, antitoxin component of a type II toxin-antitoxin (TA) system. Upon expression in M.smegmatis neutralizes the effect of cognate toxin VapC2. The C-terminal helix of the antitoxin may obstruct the toxin's RNA-binding groove, blocking access to the active sites. Additionally, the C-terminal arginine of the antitoxin may remove Mg(2+) ions from the toxin active sites. In Mycobacterium tuberculosis (strain ATCC 25618 / H37Rv), this protein is Antitoxin VapB2 (vapB2).